The primary structure comprises 153 residues: Transcriptional repressor NrdR (153 aa).

A zinc finger spans residues 3-34 (CPFCGKENTRVIDSRPADDCSSIRRRRQCDEC). Positions 49 to 139 (LVVIKKDNNR…VYREFKDVNT (91 aa)) constitute an ATP-cone domain.

It belongs to the NrdR family. It depends on Zn(2+) as a cofactor.

Its function is as follows. Negatively regulates transcription of bacterial ribonucleotide reductase nrd genes and operons by binding to NrdR-boxes. The protein is Transcriptional repressor NrdR of Lachnoclostridium phytofermentans (strain ATCC 700394 / DSM 18823 / ISDg) (Clostridium phytofermentans).